The following is a 377-amino-acid chain: tRNA-specific 2-thiouridylase MnmA (377 aa).

Residues 22-29 (GMSGGVDS) and Met-48 each bind ATP. Residues 108-110 (NPD) are interaction with target base in tRNA. The active-site Nucleophile is the Cys-113. A disulfide bond links Cys-113 and Cys-210. Gly-138 lines the ATP pocket. Residues 160-162 (KDQ) form an interaction with tRNA region. Cys-210 acts as the Cysteine persulfide intermediate in catalysis. The interval 322-323 (RY) is interaction with tRNA.

It belongs to the MnmA/TRMU family.

The protein resides in the cytoplasm. The enzyme catalyses S-sulfanyl-L-cysteinyl-[protein] + uridine(34) in tRNA + AH2 + ATP = 2-thiouridine(34) in tRNA + L-cysteinyl-[protein] + A + AMP + diphosphate + H(+). In terms of biological role, catalyzes the 2-thiolation of uridine at the wobble position (U34) of tRNA, leading to the formation of s(2)U34. This is tRNA-specific 2-thiouridylase MnmA from Shewanella amazonensis (strain ATCC BAA-1098 / SB2B).